The sequence spans 1368 residues: Indole-3-acetaldehyde oxidase (1368 aa).

One can recognise a 2Fe-2S ferredoxin-type domain in the interval 19–108 (TSLVFAINGQ…GCSITTSDGL (90 aa)). [2Fe-2S] cluster contacts are provided by Cys60, Cys65, and Cys68. An FAD-binding PCMH-type domain is found at 246-427 (LHSRKYRWSS…LSLEIPSWHS (182 aa)).

Belongs to the xanthine dehydrogenase family. As to quaternary structure, aldehyde oxidases (AO) are homodimers and heterodimers of AO subunits. AO-alpha is an AAO1 homodimer; AO-beta is an AAO1-AAO2 heterodimer. Requires [2Fe-2S] cluster as cofactor. FAD is required as a cofactor. Mo-molybdopterin serves as cofactor. Predominantly expressed in roots, seedlings, mature siliques and seeds, and to lower extent in stems and rosettes. In seedlings, mostly expressed in lower part of hypocotyls and roots.

It is found in the cytoplasm. The enzyme catalyses indole-3-acetaldehyde + O2 + H2O = (indol-3-yl)acetate + H2O2 + H(+). With respect to regulation, strongly inhibited by iodoacetate and potassium cyanide (KCN). Weakly inhibited by 2-mercaptoethanol, dithiothreitol (DTT), menadione, estradiol, 4'-(9-acridinylamino)methanesulfon-m-anisidine (mAMSA), allopurinol and tritonX-100. Not affected by p-chloromercuribenzoate. Functionally, in higher plants aldehyde oxidases (AO) appear to be homo- and heterodimeric assemblies of AO subunits with probably different physiological functions. AO-alpha may be involved in the biosynthesis of auxin, and in biosynthesis of abscisic acid (ABA) in seeds. In vitro, AO-alpha uses heptaldehyde, protocatechualdehyde, benzaldehyde, indole-3-aldehyde (IAld), indole-3-acetaldehyde (IAAld), cinnamaldehyde and citral as substrates; AO-beta uses IAAld, IAld and naphtaldehyde as substrates. The chain is Indole-3-acetaldehyde oxidase (AAO1) from Arabidopsis thaliana (Mouse-ear cress).